The chain runs to 55 residues: ATP synthase protein 8 (55 aa).

The helical transmembrane segment at 4–24 threads the bilayer; that stretch reads LDPAPWFSMLTVSWLIIFLLI.

The protein belongs to the ATPase protein 8 family. F-type ATPases have 2 components, CF(1) - the catalytic core - and CF(0) - the membrane proton channel.

Its subcellular location is the mitochondrion membrane. In terms of biological role, mitochondrial membrane ATP synthase (F(1)F(0) ATP synthase or Complex V) produces ATP from ADP in the presence of a proton gradient across the membrane which is generated by electron transport complexes of the respiratory chain. F-type ATPases consist of two structural domains, F(1) - containing the extramembraneous catalytic core and F(0) - containing the membrane proton channel, linked together by a central stalk and a peripheral stalk. During catalysis, ATP synthesis in the catalytic domain of F(1) is coupled via a rotary mechanism of the central stalk subunits to proton translocation. Part of the complex F(0) domain. Minor subunit located with subunit a in the membrane. The chain is ATP synthase protein 8 (MT-ATP8) from Petromyzon marinus (Sea lamprey).